Consider the following 2108-residue polypeptide: Mycocerosic acid synthase-like polyketide synthase (2108 aa).

Positions 1-23 are cleaved as a signal peptide; the sequence is MGKERTKTVDRTRVTPVAVIGMG. Residue Cys24 is the site of N-palmitoyl cysteine attachment. The S-diacylglycerol cysteine moiety is linked to residue Cys24. The region spanning 24–436 is the Ketosynthase family 3 (KS3) domain; that stretch reads CRLPGGIDSP…GTNVHAIVEQ (413 aa). Cys185 acts as the Acyl-thioester intermediate; for beta-ketoacyl synthase activity in catalysis. Residues His320 and His356 each act as for beta-ketoacyl synthase activity in the active site. The tract at residues 438–542 is linker domain (LD); sequence PVPAPESGAP…PYPPAVGQDD (105 aa). Residues 543 to 842 are acyltransferase (AT); it reads RGPVWVFSGQ…AAALAGMRRE (300 aa). Catalysis depends on Ser634, which acts as the Acyl-ester intermediate; for acyltransferase activity. The interval 900–1184 is dehydratase (DH); sequence NTVAVHPLLG…LAVRGLQLGT (285 aa). The interval 905 to 1025 is N-terminal hotdog fold; that stretch reads HPLLGSHVRL…AVLHVVREAD (121 aa). The region spanning 905 to 1191 is the PKS/mFAS DH domain; that stretch reads HPLLGSHVRL…LGTGASQASE (287 aa). Residue His938 is the Proton acceptor; for dehydratase activity of the active site. The segment at 1044 to 1191 is C-terminal hotdog fold; sequence PHKVDGAEVR…LGTGASQASE (148 aa). Asp1108 acts as the Proton donor; for dehydratase activity in catalysis. The tract at residues 1220–1391 is pseudo beta-ketoacyl reductase (PsiKR); sequence AWLLISTCDA…SGEDETAWRN (172 aa). The segment at 1419 to 1743 is enoylreductase (ER); sequence AGMRLQIRTP…EHTGKLILDV (325 aa). The interval 1765–2004 is beta-ketoacyl reductase (KR); it reads GSYIITGGLG…HSPFAEKFQS (240 aa). NADP(+)-binding positions include 1773-1776, 1796-1799, 1824-1825, and 1897-1898; these read LGGL, SRSQ, DI, and FS. A Carrier domain is found at 2025–2101; sequence EEWPDRLRRL…DLMCDKLAAD (77 aa). Ser2060 is subject to O-(pantetheine 4'-phosphoryl)serine.

In terms of assembly, homodimer.

It localises to the cell membrane. Its pathway is lipid metabolism; fatty acid biosynthesis. Polyketide synthase likely involved in the biosynthesis of a polymethyl-branched fatty acid (PMB-FA) that might only be produced during host infection. Is required for the full virulence of M.tuberculosis during host infection. In Mycobacterium tuberculosis (strain ATCC 25618 / H37Rv), this protein is Mycocerosic acid synthase-like polyketide synthase.